Consider the following 183-residue polypeptide: GTP cyclohydrolase 1 (183 aa).

Residues Cys-71, His-74, and Cys-142 each coordinate Zn(2+).

It belongs to the GTP cyclohydrolase I family. Toroid-shaped homodecamer, composed of two pentamers of five dimers.

It catalyses the reaction GTP + H2O = 7,8-dihydroneopterin 3'-triphosphate + formate + H(+). Its pathway is cofactor biosynthesis; 7,8-dihydroneopterin triphosphate biosynthesis; 7,8-dihydroneopterin triphosphate from GTP: step 1/1. This chain is GTP cyclohydrolase 1, found in Leptospira interrogans serogroup Icterohaemorrhagiae serovar copenhageni (strain Fiocruz L1-130).